A 339-amino-acid chain; its full sequence is Cathepsin B (339 aa).

Positions 1–17 (MWWLWASLCCLLALGDA) are cleaved as a signal peptide. The propeptide at 18–79 (RSRPSFHPLS…QRVMFTEDLK (62 aa)) is activation peptide. Disulfide bonds link C93–C122, C105–C150, C141–C207, C142–C146, C179–C211, and C187–C198. Residue C108 is part of the active site. N-linked (GlcNAc...) asparagine glycosylation occurs at N192. The residue at position 220 (K220) is an N6-acetyllysine. Catalysis depends on residues H278 and N298. Residues 334–339 (QYWEKI) constitute a propeptide that is removed on maturation.

Belongs to the peptidase C1 family. Dimer of a heavy chain and a light chain cross-linked by a disulfide bond. Interacts with SRPX2. Directly interacts with SHKBP1.

The protein localises to the lysosome. It localises to the melanosome. Its subcellular location is the secreted. The protein resides in the extracellular space. It is found in the apical cell membrane. It catalyses the reaction Hydrolysis of proteins with broad specificity for peptide bonds. Preferentially cleaves -Arg-Arg-|-Xaa bonds in small molecule substrates (thus differing from cathepsin L). In addition to being an endopeptidase, shows peptidyl-dipeptidase activity, liberating C-terminal dipeptides.. In terms of biological role, thiol protease which is believed to participate in intracellular degradation and turnover of proteins. Cleaves matrix extracellular phosphoglycoprotein MEPE. Involved in the solubilization of cross-linked TG/thyroglobulin in the thyroid follicle lumen. Has also been implicated in tumor invasion and metastasis. This chain is Cathepsin B (CTSB), found in Macaca fascicularis (Crab-eating macaque).